The chain runs to 700 residues: Ubiquitin carboxyl-terminal hydrolase BAP1 (700 aa).

Residues 4 to 235 form the UCH catalytic domain; that stretch reads GWLELESDPG…IRFNLMAVVP (232 aa). The Nucleophile role is filled by Cys91. The Proton donor role is filled by His169. Composition is skewed to low complexity over residues 273-282 and 317-332; these read SQKSQESQSP and SPPTKSKPVAKASASS. Disordered stretches follow at residues 273 to 346, 363 to 405, and 469 to 513; these read SQKS…PIVQ, QEEE…NTNS, and THSQ…SPVT. Acidic residues predominate over residues 386–399; that stretch reads SDDEDDYDDDEEEE. Residues 598–632 are a coiled coil; the sequence is SKEKELLALLKCVEAEIANYEACLKEEVEKRKKFK. The ULD domain occupies 641–669; it reads NYDEFICTFISMLAQEGMLASLVEQNISV. The tract at residues 674–700 is disordered; sequence GVSIGRLHKQRKPDRRKRSRPYKAKRQ. The Nuclear localization signal signature appears at 688–693; the sequence is RRKRSR.

This sequence belongs to the peptidase C12 family. BAP1 subfamily. In terms of assembly, component of the PR-DUB complex.

It is found in the cytoplasm. Its subcellular location is the nucleus. The catalysed reaction is Thiol-dependent hydrolysis of ester, thioester, amide, peptide and isopeptide bonds formed by the C-terminal Gly of ubiquitin (a 76-residue protein attached to proteins as an intracellular targeting signal).. In terms of biological role, deubiquitinating enzyme that plays a key role in chromatin by mediating deubiquitination of histone H2A. Catalytic component of the PR-DUB complex, a complex that specifically mediates deubiquitination of histone H2A monoubiquitinated at 'Lys-119' (H2AK119ub1). This chain is Ubiquitin carboxyl-terminal hydrolase BAP1 (BAP1), found in Gallus gallus (Chicken).